Here is a 1612-residue protein sequence, read N- to C-terminus: DNA topoisomerase 2-beta (1612 aa).

Position 2 is an N-acetylalanine (Ala-2). Residue Lys-3 is modified to N6-acetyllysine. Residues Lys-21 and Lys-22 each participate in a glycyl lysine isopeptide (Lys-Gly) (interchain with G-Cter in SUMO2) cross-link. Residues Asn-100, Asn-129, and 157–159 (SSN) contribute to the ATP site. Residues Lys-165 and Lys-166 each participate in a glycyl lysine isopeptide (Lys-Gly) (interchain with G-Cter in SUMO2) cross-link. An ATP-binding site is contributed by 170–177 (GRNGYGAK). Residues Lys-216 and Lys-287 each participate in a glycyl lysine isopeptide (Lys-Gly) (interchain with G-Cter in SUMO2) cross-link. The interval 351–353 (KKK) is interaction with DNA. Glycyl lysine isopeptide (Lys-Gly) (interchain with G-Cter in SUMO2) cross-links involve residues Lys-355 and Lys-361. 385–387 (QTK) is a binding site for ATP. Residues Lys-425, Lys-427, and Lys-434 each participate in a glycyl lysine isopeptide (Lys-Gly) (interchain with G-Cter in SUMO2) cross-link. Residues 464-581 (CTLILTEGDS…SLLKHGFLEE (118 aa)) form the Toprim domain. The Mg(2+) site is built by Glu-470, Asp-550, and Asp-552. Residues Lys-588, Lys-593, Lys-623, Lys-631, Lys-634, Lys-664, and Lys-700 each participate in a glycyl lysine isopeptide (Lys-Gly) (interchain with G-Cter in SUMO2) cross-link. A Topo IIA-type catalytic domain is found at 724–1177 (IPSLVDGFKP…SPSDLWKEDL (454 aa)). The active-site O-(5'-phospho-DNA)-tyrosine intermediate is the Tyr-814. Positions 999–1008 (KLQTTLTCNS) are interaction with DNA. Lys-1080 participates in a covalent cross-link: Glycyl lysine isopeptide (Lys-Gly) (interchain with G-Cter in SUMO2). Residues 1098-1128 (AWKEAQEKAAEEEDSQNQHDDSSSDSGTPSG) form a disordered region. Residues Lys-1202, Lys-1205, Lys-1214, and Lys-1215 each participate in a glycyl lysine isopeptide (Lys-Gly) (interchain with G-Cter in SUMO2) cross-link. Position 1224 is a phosphoserine (Ser-1224). Residues Lys-1238, Lys-1250, and Lys-1259 each participate in a glycyl lysine isopeptide (Lys-Gly) (interchain with G-Cter in SUMO2) cross-link. The segment at 1245–1586 (LLKKKKGDPD…FTSEPPALPR (342 aa)) is disordered. Position 1280 is a phosphothreonine (Thr-1280). Residues Lys-1311 and Lys-1315 each participate in a glycyl lysine isopeptide (Lys-Gly) (interchain with G-Cter in SUMO2) cross-link. 2 stretches are compositionally biased toward basic and acidic residues: residues 1322-1332 (PWSDDESKSES) and 1346-1358 (SLLR…RPKY). Phosphoserine is present on residues Ser-1324, Ser-1328, Ser-1330, Ser-1332, and Ser-1346. The residue at position 1358 (Tyr-1358) is a Phosphotyrosine. Acidic residues predominate over residues 1362–1379 (FSEEEDDDAAAADDSNDL). 2 positions are modified to phosphoserine: Ser-1363 and Ser-1376. A Glycyl lysine isopeptide (Lys-Gly) (interchain with G-Cter in SUMO2) cross-link involves residue Lys-1385. Position 1387 is a phosphoserine (Ser-1387). Thr-1390 is modified (phosphothreonine). Ser-1400 carries the phosphoserine modification. A Phosphotyrosine modification is found at Tyr-1408. Ser-1411 is modified (phosphoserine). Basic and acidic residues predominate over residues 1417 to 1429 (ATPEKSSNDKKSQ). Lys-1427 is covalently cross-linked (Glycyl lysine isopeptide (Lys-Gly) (interchain with G-Cter in SUMO2)). Phosphoserine is present on residues Ser-1428, Ser-1439, and Ser-1441. Residue Lys-1443 forms a Glycyl lysine isopeptide (Lys-Gly) (interchain with G-Cter in SUMO2) linkage. The segment covering 1443–1453 (KSEDDSAKFDS) has biased composition (basic and acidic residues). Phosphoserine is present on residues Ser-1448, Ser-1453, and Ser-1460. Residue Lys-1477 forms a Glycyl lysine isopeptide (Lys-Gly) (interchain with G-Cter in SUMO2) linkage. An interaction with PLSCR1 region spans residues 1493–1499 (KAKRAPK). Phosphoserine occurs at positions 1509, 1511, and 1513. Basic residues predominate over residues 1526-1536 (GKGRGAKKRKA). Residues Ser-1537 and Ser-1539 each carry the phosphoserine modification. Positions 1550-1561 (KPSKTASKKPKK) are enriched in basic residues. Thr-1562 is subject to Phosphothreonine. 2 positions are modified to phosphoserine: Ser-1563 and Ser-1568. Tyr-1596 carries the post-translational modification Phosphotyrosine. Residue Ser-1600 is modified to Phosphoserine.

The protein belongs to the type II topoisomerase family. Homodimer. Interacts with KIAA1210. Interacts with PLSCR1. Requires Mg(2+) as cofactor. Mn(2+) serves as cofactor. It depends on Ca(2+) as a cofactor.

It localises to the nucleus. The protein localises to the nucleolus. Its subcellular location is the nucleoplasm. The enzyme catalyses ATP-dependent breakage, passage and rejoining of double-stranded DNA.. Its function is as follows. Key decatenating enzyme that alters DNA topology by binding to two double-stranded DNA molecules, generating a double-stranded break in one of the strands, passing the intact strand through the broken strand, and religating the broken strand. Plays a role in B-cell differentiation. In Mus musculus (Mouse), this protein is DNA topoisomerase 2-beta (Top2b).